The following is an 837-amino-acid chain: Protein translocase subunit SecA 1 (837 aa).

ATP contacts are provided by residues Q85, 103–107, and D493; that span reads GEGKT. Zn(2+) contacts are provided by C821, C823, C832, and H833.

Belongs to the SecA family. As to quaternary structure, monomer and homodimer. Part of the essential Sec protein translocation apparatus which comprises SecA, SecYEG and auxiliary proteins SecDF. Other proteins may also be involved. The cofactor is Zn(2+).

It localises to the cell membrane. Its subcellular location is the cytoplasm. It catalyses the reaction ATP + H2O + cellular proteinSide 1 = ADP + phosphate + cellular proteinSide 2.. Its function is as follows. Part of the Sec protein translocase complex. Interacts with the SecYEG preprotein conducting channel. Has a central role in coupling the hydrolysis of ATP to the transfer of proteins into and across the cell membrane, serving as an ATP-driven molecular motor driving the stepwise translocation of polypeptide chains across the membrane. This is Protein translocase subunit SecA 1 from Streptococcus pneumoniae serotype 4 (strain ATCC BAA-334 / TIGR4).